Consider the following 152-residue polypeptide: MVKAVAVLNSSEGVSGTILFTQDGAAPTTVNGNISGLKPGLHGFHVHALGDTTNGCMSTGPHYNPAGKEHGAPEDEVRHAGDLGNITVGEDGTASFTITDKQIPLTGPQSIIGRAVVVHADPDDLGKGGHELSKSTGNAGGRIACGIIGLQG.

Positions 45, 47, and 62 each coordinate Cu cation. A disulfide bond links Cys56 and Cys145. Positions 62, 70, 79, and 82 each coordinate Zn(2+). Cu cation is bound at residue His119.

The protein belongs to the Cu-Zn superoxide dismutase family. Homodimer. It depends on Cu cation as a cofactor. Zn(2+) serves as cofactor.

The protein resides in the cytoplasm. The enzyme catalyses 2 superoxide + 2 H(+) = H2O2 + O2. Its function is as follows. Destroys radicals which are normally produced within the cells and which are toxic to biological systems. The chain is Superoxide dismutase [Cu-Zn] 2 (SODCC.5) from Solanum lycopersicum (Tomato).